A 546-amino-acid chain; its full sequence is CTP synthase (546 aa).

Residues Met-1–Leu-266 form an amidoligase domain region. Ser-14 contacts CTP. Ser-14 provides a ligand contact to UTP. Residues Ser-15–Ile-20 and Asp-72 contribute to the ATP site. Mg(2+) contacts are provided by Asp-72 and Glu-140. Residues Asp-147 to Glu-149, Lys-187 to Gln-192, and Lys-223 each bind CTP. Residues Lys-187–Gln-192 and Lys-223 each bind UTP. ATP is bound at residue Lys-239 to Val-241. The Glutamine amidotransferase type-1 domain maps to Val-291 to Arg-542. Gly-352 is a binding site for L-glutamine. The active-site Nucleophile; for glutamine hydrolysis is the Cys-379. L-glutamine contacts are provided by residues Leu-380–Gln-383, Glu-403, and Arg-470. Catalysis depends on residues His-515 and Glu-517.

This sequence belongs to the CTP synthase family. In terms of assembly, homotetramer.

The catalysed reaction is UTP + L-glutamine + ATP + H2O = CTP + L-glutamate + ADP + phosphate + 2 H(+). It carries out the reaction L-glutamine + H2O = L-glutamate + NH4(+). It catalyses the reaction UTP + NH4(+) + ATP = CTP + ADP + phosphate + 2 H(+). The protein operates within pyrimidine metabolism; CTP biosynthesis via de novo pathway; CTP from UDP: step 2/2. Allosterically activated by GTP, when glutamine is the substrate; GTP has no effect on the reaction when ammonia is the substrate. The allosteric effector GTP functions by stabilizing the protein conformation that binds the tetrahedral intermediate(s) formed during glutamine hydrolysis. Inhibited by the product CTP, via allosteric rather than competitive inhibition. Catalyzes the ATP-dependent amination of UTP to CTP with either L-glutamine or ammonia as the source of nitrogen. Regulates intracellular CTP levels through interactions with the four ribonucleotide triphosphates. In Shewanella sp. (strain ANA-3), this protein is CTP synthase.